A 1310-amino-acid chain; its full sequence is Contactin-associated protein-like 4 (1310 aa).

The signal sequence occupies residues 1 to 27 (MNMGSVAGAVLKMLLLLSTQNWNRVEA). Topologically, residues 28-1243 (GNSYDCDEPL…LTHAIKSDSA (1216 aa)) are extracellular. One can recognise an F5/8 type C domain in the interval 33-179 (CDEPLVSALP…IGMRIEVFGC (147 aa)). Residues C33 and C179 are joined by a disulfide bond. The Laminin G-like 1 domain occupies 214–346 (FKTMESDGIL…NLFYNGVDVI (133 aa)). N262, N287, and N361 each carry an N-linked (GlcNAc...) asparagine glycan. 4 disulfides stabilise this stretch: C334-C366, C517-C549, C555-C566, and C560-C575. The Laminin G-like 2 domain maps to 400 to 529 (FRTWNKAGLL…LISINNKMVD (130 aa)). N540 carries an N-linked (GlcNAc...) asparagine glycan. An EGF-like 1 domain is found at 551–588 (ISDRCLPNSCEHGGECSQSWSTFHCNCTNTGYTGATCH). N-linked (GlcNAc...) asparagine glycosylation occurs at N576. C577 and C587 are joined by a disulfide. The Fibrinogen C-terminal domain maps to 589 to 794 (SSVYEQSCEA…LLCRGDRPFW (206 aa)). N-linked (GlcNAc...) asparagine glycans are attached at residues N604, N627, N639, N708, and N750. The Laminin G-like 3 domain maps to 795–960 (NAASFNTEAS…TVTPGVQPGC (166 aa)). Disulfide bonds link C933–C960, C964–C977, C971–C986, and C988–C998. The 40-residue stretch at 960 to 999 (CRGHCGSYGKLCRHGGKCREKPSGFFCDCSSSAYAGPFCS) folds into the EGF-like 2 domain. Residues N1019, N1025, and N1075 are each glycosylated (N-linked (GlcNAc...) asparagine). The 157-residue stretch at 1048-1204 (FRTTRAPSLL…VTGHVTESSC (157 aa)) folds into the Laminin G-like 4 domain. Cysteines 1169 and 1204 form a disulfide. Residues 1244–1264 (VIGGLIAVVIFILLCVSAIAV) form a helical membrane-spanning segment. Over 1265–1310 (RIYQQKRLYKRNEAKRSENVDSAEAVLKSELHIQNAVGENQKEYFF) the chain is Cytoplasmic.

This sequence belongs to the neurexin family. As to quaternary structure, interacts with TIAM1. As to expression, specifically present in developing cortical interneurons: highly expressed in cortical parvalbumin (PV) cells and midbrain dopaminergic neurons and is localized presynaptically (at protein level). Also present in the substantia nigra pars compacta (SnC) and ventral tegmental area (VTA) midbrain dopaminergic projection populations.

It is found in the presynaptic cell membrane. Presynaptic protein involved in both dopaminergic synaptic transmission and GABAergic system, thereby participating in the structural maturation of inhibitory interneuron synapses. Involved in the dopaminergic synaptic transmission by attenuating dopamine release through a presynaptic mechanism. Also participates in the GABAergic system. The sequence is that of Contactin-associated protein-like 4 (Cntnap4) from Mus musculus (Mouse).